Reading from the N-terminus, the 359-residue chain is Fructose-bisphosphate aldolase (359 aa).

S50 contacts D-glyceraldehyde 3-phosphate. D83 (proton donor) is an active-site residue. Zn(2+) is bound by residues H84, D105, E142, and H198. G199 contacts dihydroxyacetone phosphate. Zn(2+) is bound at residue H232. Residues 233-235 and 275-278 each bind dihydroxyacetone phosphate; these read GSS and NIDT.

Belongs to the class II fructose-bisphosphate aldolase family. As to quaternary structure, homodimer. It depends on Zn(2+) as a cofactor.

It carries out the reaction beta-D-fructose 1,6-bisphosphate = D-glyceraldehyde 3-phosphate + dihydroxyacetone phosphate. The protein operates within carbohydrate biosynthesis; Calvin cycle. It participates in carbohydrate degradation; glycolysis; D-glyceraldehyde 3-phosphate and glycerone phosphate from D-glucose: step 4/4. Catalyzes the aldol condensation of dihydroxyacetone phosphate (DHAP or glycerone-phosphate) with glyceraldehyde 3-phosphate (G3P) to form fructose 1,6-bisphosphate (FBP) in gluconeogenesis and the reverse reaction in glycolysis. This is Fructose-bisphosphate aldolase (cbbA) from Rhizobium meliloti (strain 1021) (Ensifer meliloti).